The sequence spans 410 residues: Structure-specific endonuclease subunit SLX1 homolog (410 aa).

In terms of domain architecture, GIY-YIG spans 6–89 (QLHYCYFLLS…NICKVTRDNI (84 aa)).

Belongs to the SLX1 family. In terms of assembly, forms a heterodimer with a member of the SLX4 family. It depends on a divalent metal cation as a cofactor.

The protein resides in the nucleus. Catalytic subunit of a heterodimeric structure-specific endonuclease that resolves DNA secondary structures generated during DNA repair and recombination. Has endonuclease activity towards branched DNA substrates, introducing single-strand cuts in duplex DNA close to junctions with ss-DNA. This is Structure-specific endonuclease subunit SLX1 homolog from Cryptosporidium parvum (strain Iowa II).